A 269-amino-acid chain; its full sequence is Tryptophan synthase alpha chain (269 aa).

Catalysis depends on proton acceptor residues Glu50 and Asp61.

The protein belongs to the TrpA family. In terms of assembly, tetramer of two alpha and two beta chains.

The catalysed reaction is (1S,2R)-1-C-(indol-3-yl)glycerol 3-phosphate + L-serine = D-glyceraldehyde 3-phosphate + L-tryptophan + H2O. It functions in the pathway amino-acid biosynthesis; L-tryptophan biosynthesis; L-tryptophan from chorismate: step 5/5. Its function is as follows. The alpha subunit is responsible for the aldol cleavage of indoleglycerol phosphate to indole and glyceraldehyde 3-phosphate. The sequence is that of Tryptophan synthase alpha chain from Buchnera aphidicola subsp. Baizongia pistaciae (strain Bp).